Here is a 248-residue protein sequence, read N- to C-terminus: 3-deoxy-manno-octulosonate cytidylyltransferase (248 aa).

This sequence belongs to the KdsB family.

It is found in the cytoplasm. The enzyme catalyses 3-deoxy-alpha-D-manno-oct-2-ulosonate + CTP = CMP-3-deoxy-beta-D-manno-octulosonate + diphosphate. It functions in the pathway nucleotide-sugar biosynthesis; CMP-3-deoxy-D-manno-octulosonate biosynthesis; CMP-3-deoxy-D-manno-octulosonate from 3-deoxy-D-manno-octulosonate and CTP: step 1/1. Its pathway is bacterial outer membrane biogenesis; lipopolysaccharide biosynthesis. Its function is as follows. Activates KDO (a required 8-carbon sugar) for incorporation into bacterial lipopolysaccharide in Gram-negative bacteria. This Salmonella paratyphi A (strain ATCC 9150 / SARB42) protein is 3-deoxy-manno-octulosonate cytidylyltransferase.